We begin with the raw amino-acid sequence, 130 residues long: Histone H2A.6 (130 aa).

Positions M1 to G12 are enriched in gly residues. The segment at M1–A23 is disordered.

Belongs to the histone H2A family. In terms of assembly, the nucleosome is a histone octamer containing two molecules each of H2A, H2B, H3 and H4 assembled in one H3-H4 heterotetramer and two H2A-H2B heterodimers. The octamer wraps approximately 147 bp of DNA. Interacts with VIP1. In terms of processing, not ubiquitinated. As to expression, low level of expression, mainly in dividing tissues: floral buds, margins of newly emerging leaves, expanding leaves and the meristematic zone of root tips. Also expressed in many non-dividing cells of the elongation zone of the root.

It localises to the nucleus. The protein resides in the chromosome. In terms of biological role, core component of nucleosome. Nucleosomes wrap and compact DNA into chromatin, limiting DNA accessibility to the cellular machineries which require DNA as a template. Histones thereby play a central role in transcription regulation, DNA repair, DNA replication and chromosomal stability. DNA accessibility is regulated via a complex set of post-translational modifications of histones, also called histone code, and nucleosome remodeling. Required for the T-DNA integration step of plant transformation by Agrobacterium. May play an important role in illegitimate recombination. This Arabidopsis thaliana (Mouse-ear cress) protein is Histone H2A.6 (RAT5).